The primary structure comprises 575 residues: Stage VI sporulation protein D (575 aa).

Positions 159 to 502 (EELSEPPAHS…ETKEPQTKES (344 aa)) are disordered. Residues 200 to 212 (GLREELETEKAES) show a composition bias toward basic and acidic residues. Acidic residues-rich tracts occupy residues 229–238 (KEEEESEELA) and 249–264 (ETEE…EIEI). Composition is skewed to basic and acidic residues over residues 266–275 (EIVKAKKETA), 283–302 (DVRE…HVGA), and 310–325 (AELH…KEET). Acidic residues predominate over residues 438–448 (EEEEQEEESFE). The segment covering 449 to 464 (IEVRKTPSAEEPKEET) has biased composition (basic and acidic residues). Residues 465-474 (PFQSFQLPES) show a composition bias toward polar residues. Residues 493-502 (ETKEPQTKES) show a composition bias toward basic and acidic residues. A LysM domain is found at 523-567 (KICIVQQEDTIERLCERYEITSQQLIRMNSLALDDELKAGQILYI).

In terms of biological role, required for assembly of a normal spore coat. May be a component of the innermost layer of the spore coat that aids in its adherence to the prespore. This Bacillus subtilis (strain 168) protein is Stage VI sporulation protein D (spoVID).